The primary structure comprises 109 residues: Nucleoid-associated protein VV2410 (109 aa).

The tract at residues 1 to 22 (MFGKGGMGNLMKQAQQMQERMQ) is disordered.

Belongs to the YbaB/EbfC family. As to quaternary structure, homodimer.

It localises to the cytoplasm. Its subcellular location is the nucleoid. Functionally, binds to DNA and alters its conformation. May be involved in regulation of gene expression, nucleoid organization and DNA protection. The chain is Nucleoid-associated protein VV2410 from Vibrio vulnificus (strain YJ016).